The primary structure comprises 461 residues: Fumarate hydratase class II (461 aa).

Substrate is bound by residues 97–99 (SGT), 127–130 (HPND), 137–139 (SSN), and Thr-185. Catalysis depends on His-186, which acts as the Proton donor/acceptor. Ser-316 is an active-site residue. Residues Ser-317 and 322–324 (KVN) contribute to the substrate site.

The protein belongs to the class-II fumarase/aspartase family. Fumarase subfamily. Homotetramer.

The protein localises to the cytoplasm. The catalysed reaction is (S)-malate = fumarate + H2O. Its pathway is carbohydrate metabolism; tricarboxylic acid cycle; (S)-malate from fumarate: step 1/1. In terms of biological role, involved in the TCA cycle. Catalyzes the stereospecific interconversion of fumarate to L-malate. This Staphylococcus epidermidis (strain ATCC 35984 / DSM 28319 / BCRC 17069 / CCUG 31568 / BM 3577 / RP62A) protein is Fumarate hydratase class II.